Consider the following 983-residue polypeptide: MFVASKQADEQKKLVIEQEVQKRQFKKIEELKADMQKGVNPFFKVLFDGGNRLFGFPETFIYSSIFILFVTIVLSVILFQAYEPVLIVAIVIVLVALGFKKDYRLYQRMERAMKFKKPFLFKGVKNKAFMSIFSMKPSKEMANDIHLNPNREDRLVSAANSYLANNYECFLDDGVILTNNYSLLGTIKLGGIDFLTTSKKDLIELHASIYSVFRNFVTPEFKFYFHTVKKKIVIDETNRDYSLIFSNDFMRAYNEKQKRESFYDISFYLTIEQDLLDTLNEPVMNKKHFADNNFEEFQRIIRAKLENFKDRIELIEELLSKYHPIRLKEYTKDGVIYSKQCEFYNFLVGMNEAPFICNRKDLYLKEKMHGGVKEVYFANKHGKILNDDLSEKYFSAIEISEYAPKSQSDLFDKINALDSEFIFMHAYSPKNSQVLKDKLAFTSRRIIISGGSKEQGMTLGCLSELVGNGDITLGSYGNSLVLFADSFEKMKQSVKECVSSLNAKGFLANAATFSMENYFFAKHCSFITLPFIFDVTSNNFADFIAMRAMSFDGNQENNAWGNSVMTLKSEINSPFYLNFHMPTDFGSASAGHTLILGSTGSGKTVFMSMTLNAMGQFVHNFPANVSKDKQKLTMVYMDKDYGAYGNIVAMGGEYVKIELGTDTGLNPFAWAACVQKTNATMEQKQTAISVVKELVKNLATKSDEKDENGNSISFSLADSNTLAAAVTNLITGDMNLDYPITQLINAFGKDHNDPNGLVARLAPFCKSTNGEFQWLFDNKATDRLDFSKTIIGVDGSSFLDNNDVSPFICFYLFARIQEAMDGRRFVLDIDEAWKYLGDPKVAYFVRDMLKTARKRNAIVRLATQSITDLLACPIADTIREQCPTKIFLRNDGGNLSDYQRLANVTEKEFEIITKGLDRKILYKQDGSPSVIASFNLRGIPKEYLKILSTDTVFVKEIDKIIQNHSIIDKYQALRQMYQQIKEY.

597–604 lines the ATP pocket; it reads GSTGSGKT.

It belongs to the TrbE/VirB4 family. In terms of assembly, component of the Cag type IV secretion system, which is composed of a wheel-shaped outer membrane complex (OMC) and an inner membrane complex (IMC). Interacts with CagV and CagBeta.

The protein localises to the cell inner membrane. It carries out the reaction ATP + H2O + cellular proteinSide 1 = ADP + phosphate + cellular proteinSide 2.. ATPase component of the type IV secretion system Cag (Cag-T4SS). Acts as a molecular motor to provide the energy that is required for the export of proteins. Required for CagA translocation and induction of IL-8 in host gastric epithelial cells. Plays a key role in Cag-T4SS pilus biogenesis, especially in the localization and stabilization of the pilus-associated components CagI, CagL and the surface protein CagH. Is also critical for assembly of the entire cytoplasmic portion of the Cag inner membrane complex (IMC). The chain is Type IV secretion system protein CagE from Helicobacter pylori (strain ATCC 700392 / 26695) (Campylobacter pylori).